Reading from the N-terminus, the 800-residue chain is MLISNEWLKEYVTIDDSVSDLAERITRTGIEVDDLIDYTKDIKNLVVGFVKSKEKHPDADKLNVCQVDIGEDEPVQIVCGAPNVDAGQYVIVAKVGGRLPGGIKIKRAKLRGERSEGMICSLQEIGISSNYIPKSFESGIYVFSESQVPGTDALQALYLDDQVMEFDLTPNRADALSMIGTAYEVAALYNTKMTKPETTSNELELSANDELTVTIENEDKVPYYSARVVHDVTIEPSPIWMQARLIKAGIRPINNVVDISNYVLLEYGQPLHMFDQDAIGSQQIVVRQANEGEKMTTLDDTERELLTSDIVITNGQTPIALAGVMGGDFSEVKEQTSNIVIEGAIFDPVSIRHTSRRLNLRSESSSRFEKGIATEFVDEAVDRACYLLQTYANGKVLKDRVSSGELGAFITPIDITADKINRTIGFDLSQNDIVTIFNQLGFDTEINDDVITVLVPSRRKDITIKEDLIEEVARIYGYDDIPSTLPVFDKVTSGQLTDRQYKTRMVKEVLEGAGLDQAITYSLVSKEDATAFSMQQRQTIDLLMPMSEAHASLRQSLLPHLIEVASYNVARKNKDVKLFEIGNVFFANGEGELPDQVEYLSGILTGDYVVNQWQGKKETVDFYLAKGVVDRVSEKLNLEFSYRRADIDGLHPGRTAEILLENKVVGFIGELHPTLAADNDLKRTYVFELNFDALMAVSVGYINYQPIPRFPGMSRDIALEVDQNIPAADLLSTIHAHGGNILKDTLVFDVYQGEHLEKGKKSIAIRLNYLDTEETLTDERVSKVQAEIEAALIEQGAVIR.

The tRNA-binding domain maps to 39-154 (TKDIKNLVVG…ESQVPGTDAL (116 aa)). A B5 domain is found at 408 to 483 (AFITPIDITA…RIYGYDDIPS (76 aa)). 4 residues coordinate Mg(2+): Asp-461, Asp-467, Glu-470, and Glu-471. Positions 708 to 800 (PRFPGMSRDI…ALIEQGAVIR (93 aa)) constitute an FDX-ACB domain.

Belongs to the phenylalanyl-tRNA synthetase beta subunit family. Type 1 subfamily. As to quaternary structure, tetramer of two alpha and two beta subunits. Mg(2+) serves as cofactor.

The protein localises to the cytoplasm. It carries out the reaction tRNA(Phe) + L-phenylalanine + ATP = L-phenylalanyl-tRNA(Phe) + AMP + diphosphate + H(+). This Staphylococcus aureus protein is Phenylalanine--tRNA ligase beta subunit.